Reading from the N-terminus, the 953-residue chain is Coiled-coil domain-containing protein 14 (953 aa).

Over residues 1 to 21 (MKRGIRRDPFRKRKLGGRAKK) the composition is skewed to basic residues. Disordered regions lie at residues 1–22 (MKRG…AKKV) and 52–72 (SGAR…AKLT). A Phosphoserine modification is found at serine 124. 2 disordered regions span residues 126-189 (SETA…TSDL) and 268-287 (PPCP…SQFA). Residues 145–154 (YGSKKKRHEK) are compositionally biased toward basic residues. Over residues 169–187 (DNKKQIPNEASARSERDTS) the composition is skewed to basic and acidic residues. Polar residues predominate over residues 277–287 (EVQTDGNSQFA). Coiled-coil stretches lie at residues 383–413 (LATN…RDTK) and 483–618 (AMQP…AEKE). Serine 670, serine 754, and serine 798 each carry phosphoserine.

As to quaternary structure, interacts with CEP63.

Its subcellular location is the cytoplasm. It localises to the cytoskeleton. It is found in the microtubule organizing center. The protein resides in the centrosome. The protein localises to the centriolar satellite. Negatively regulates centriole duplication. Negatively regulates CEP63 and CDK2 centrosomal localization. This chain is Coiled-coil domain-containing protein 14 (CCDC14), found in Homo sapiens (Human).